Consider the following 179-residue polypeptide: CASP-like protein 1F1 (179 aa).

Topologically, residues 1–16 (MENVEDKYNSPLKSQK) are cytoplasmic. Residues 17–37 (LFIGAQICLRIVTIGATLAAT) traverse the membrane as a helical segment. At 38 to 65 (WIMVTDKQSITFGDFVMVAKYNYSSAFK) the chain is on the extracellular side. The N-linked (GlcNAc...) asparagine glycan is linked to Asn59. The chain crosses the membrane as a helical span at residues 66–86 (FFVLANVIACACSVVSLLFLC). The Cytoplasmic portion of the chain corresponds to 87–105 (ALGRYSSNPGHVFLLFLHD). Residues 106 to 126 (LLMMSLVLAGCSAATAIGFLG) traverse the membrane as a helical segment. At 127–150 (KYGNTKSGWMPICDQFGQFCNRGT) the chain is on the extracellular side. Residues 151–171 (ISMMLSYLSMVCLLILTVTSA) form a helical membrane-spanning segment. At 172–179 (NKSRQIHV) the chain is on the cytoplasmic side.

This sequence belongs to the Casparian strip membrane proteins (CASP) family. As to quaternary structure, homodimer and heterodimers.

It is found in the cell membrane. This chain is CASP-like protein 1F1, found in Ricinus communis (Castor bean).